A 349-amino-acid chain; its full sequence is tRNA N6-adenosine threonylcarbamoyltransferase (349 aa).

Fe cation-binding residues include His117 and His121. Residues 139 to 143 (QVSGG), Asp172, Gly185, Asp189, and Asn278 contribute to the substrate site. Asp310 lines the Fe cation pocket.

The protein belongs to the KAE1 / TsaD family. Fe(2+) serves as cofactor.

It is found in the cytoplasm. It carries out the reaction L-threonylcarbamoyladenylate + adenosine(37) in tRNA = N(6)-L-threonylcarbamoyladenosine(37) in tRNA + AMP + H(+). Its function is as follows. Required for the formation of a threonylcarbamoyl group on adenosine at position 37 (t(6)A37) in tRNAs that read codons beginning with adenine. Is involved in the transfer of the threonylcarbamoyl moiety of threonylcarbamoyl-AMP (TC-AMP) to the N6 group of A37, together with TsaE and TsaB. TsaD likely plays a direct catalytic role in this reaction. The sequence is that of tRNA N6-adenosine threonylcarbamoyltransferase from Lactobacillus acidophilus (strain ATCC 700396 / NCK56 / N2 / NCFM).